Here is a 201-residue protein sequence, read N- to C-terminus: Ribosome maturation factor RimP (201 aa).

A disordered region spans residues Leu180 to Leu201. Positions Gln188 to Leu201 are enriched in acidic residues.

It belongs to the RimP family.

The protein localises to the cytoplasm. In terms of biological role, required for maturation of 30S ribosomal subunits. This Methylobacterium sp. (strain 4-46) protein is Ribosome maturation factor RimP.